Reading from the N-terminus, the 295-residue chain is Small ribosomal subunit protein mS23 (295 aa).

Residues 249–295 (IGSVVEEEKSQSSLFEDLLSNDNLQSEPEVEQSGQQQQQEQPKQETN) form a disordered region. The span at 273–289 (QSEPEVEQSGQQQQQEQ) shows a compositional bias: low complexity.

This sequence belongs to the mitochondrion-specific ribosomal protein mS23 family. Component of the mitochondrial small ribosomal subunit (mt-SSU).

Its subcellular location is the mitochondrion. Component of the mitochondrial ribosome (mitoribosome), a dedicated translation machinery responsible for the synthesis of mitochondrial genome-encoded proteins, including at least some of the essential transmembrane subunits of the mitochondrial respiratory chain. The mitoribosomes are attached to the mitochondrial inner membrane and translation products are cotranslationally integrated into the membrane. The polypeptide is Small ribosomal subunit protein mS23 (RSM25) (Candida albicans (strain SC5314 / ATCC MYA-2876) (Yeast)).